The sequence spans 314 residues: Probable 5-dehydro-4-deoxyglucarate dehydratase (314 aa).

The protein belongs to the DapA family.

It catalyses the reaction 5-dehydro-4-deoxy-D-glucarate + H(+) = 2,5-dioxopentanoate + CO2 + H2O. It functions in the pathway carbohydrate acid metabolism; D-glucarate degradation; 2,5-dioxopentanoate from D-glucarate: step 2/2. This is Probable 5-dehydro-4-deoxyglucarate dehydratase from Bradyrhizobium sp. (strain ORS 278).